The following is a 583-amino-acid chain: Undecaprenyl phosphate-alpha-4-amino-4-deoxy-L-arabinose arabinosyl transferase 2 (583 aa).

The interval 1 to 20 (MTSRIQMHRTSPPPAYGTSA) is disordered. A run of 12 helical transmembrane segments spans residues 42–62 (LLLV…GLWI), 113–135 (LFGV…YLIT), 145–165 (SFAA…AGYS), 166–186 (NLDP…WFAL), 209–229 (FMTK…PYMI), 241–261 (GLVA…SIHA), 290–310 (WWFY…LLPG), 321–341 (QAPT…FSLS), 345–365 (LPTY…SALI), 380–400 (SLLN…IQLT), 409–429 (MLGL…NLLP), and 440–460 (PALG…GFIV).

This sequence belongs to the glycosyltransferase 83 family.

Its subcellular location is the cell inner membrane. The catalysed reaction is 4-amino-4-deoxy-alpha-L-arabinopyranosyl di-trans,octa-cis-undecaprenyl phosphate + lipid IVA = lipid IIA + di-trans,octa-cis-undecaprenyl phosphate.. The protein operates within lipopolysaccharide metabolism; 4-amino-4-deoxy-beta-L-arabinose-lipid A biosynthesis. Its function is as follows. Catalyzes the transfer of the L-Ara4N moiety of the glycolipid undecaprenyl phosphate-alpha-L-Ara4N to lipid A. The modified arabinose is attached to lipid A and is required for resistance to polymyxin and cationic antimicrobial peptides. This Pseudomonas fluorescens (strain ATCC BAA-477 / NRRL B-23932 / Pf-5) protein is Undecaprenyl phosphate-alpha-4-amino-4-deoxy-L-arabinose arabinosyl transferase 2.